A 106-amino-acid polypeptide reads, in one-letter code: Glycine/glutamate-rich protein sgp1 (106 aa).

The first 20 residues, 1–20 (MKYSLIFILTLACLIASSLA), serve as a signal peptide directing secretion. The segment at 20–66 (ARPEGEEKPADDAAGDKKEEGAEGDKTAAGGDEGFTGGDGKNAGGAG) is disordered. A compositionally biased stretch (basic and acidic residues) spans 22-45 (PEGEEKPADDAAGDKKEEGAEGDK). Residues 50 to 66 (GDEGFTGGDGKNAGGAG) are compositionally biased toward gly residues.

Its subcellular location is the secreted. In Glossina morsitans morsitans (Savannah tsetse fly), this protein is Glycine/glutamate-rich protein sgp1 (sgp1).